Here is a 278-residue protein sequence, read N- to C-terminus: Shikimate dehydrogenase (NADP(+)) (278 aa).

Shikimate contacts are provided by residues 23-25 (SRS) and threonine 70. Residue lysine 74 is the Proton acceptor of the active site. Glutamate 86 lines the NADP(+) pocket. Asparagine 95 and aspartate 110 together coordinate shikimate. NADP(+) is bound by residues 135 to 139 (GAGGA), 159 to 164 (NRTKEK), and methionine 224. Residue tyrosine 226 participates in shikimate binding. Glycine 248 is a binding site for NADP(+).

Belongs to the shikimate dehydrogenase family. As to quaternary structure, homodimer.

It catalyses the reaction shikimate + NADP(+) = 3-dehydroshikimate + NADPH + H(+). It functions in the pathway metabolic intermediate biosynthesis; chorismate biosynthesis; chorismate from D-erythrose 4-phosphate and phosphoenolpyruvate: step 4/7. Its function is as follows. Involved in the biosynthesis of the chorismate, which leads to the biosynthesis of aromatic amino acids. Catalyzes the reversible NADPH linked reduction of 3-dehydroshikimate (DHSA) to yield shikimate (SA). This is Shikimate dehydrogenase (NADP(+)) from Alcanivorax borkumensis (strain ATCC 700651 / DSM 11573 / NCIMB 13689 / SK2).